Reading from the N-terminus, the 601-residue chain is Protein nubbin (601 aa).

Residues 1–25 (MVMSELRWHTASPEDNKNSLKRDLL) are compositionally biased toward basic and acidic residues. 5 disordered regions span residues 1–32 (MVMSELRWHTASPEDNKNSLKRDLLKSTPTSA), 49–94 (SRSP…AKRQ), 121–158 (KQEEDYDDANGGALNLTSDNSRHSTQSPSNSVKSATAS), 351–425 (PASS…ETTD), and 581–601 (INPSLDSPTGADDDESSYMMH). Residues 49 to 68 (SRSPSPLQSNASDCDDNNSS) show a composition bias toward low complexity. Polar residues predominate over residues 135 to 157 (NLTSDNSRHSTQSPSNSVKSATA). A compositionally biased stretch (low complexity) spans 384-415 (TPSTPTSGTQMSQGTTTPQPKTVASAAAARAA). In terms of domain architecture, POU-specific spans 421–495 (EETTDLEELE…LLQKWLDDAD (75 aa)). A DNA-binding region (homeobox) is located at residues 523–582 (RRKKRTSIETTIRGALEKAFLANQKPTSEEITQLADRLSMEKEVVRVWFCNRRQKEKRIN). Acidic residues predominate over residues 591–601 (ADDDESSYMMH).

Belongs to the POU transcription factor family. Class-2 subfamily. As to expression, initial expression in cellular blastoderm stage, then in ectodermal stripes during germband extension. Broad expression in the neuroectoderm followed by limitation to discrete subsets of CNS cells, and expression in specific PNS neurons and support cells.

It is found in the nucleus. Its function is as follows. DNA-binding regulatory protein implicated in early development. Involved in neuronal cell fate decision. Repressed directly or indirectly by the BX-C homeotic proteins. The sequence is that of Protein nubbin (nub) from Drosophila melanogaster (Fruit fly).